Reading from the N-terminus, the 160-residue chain is Ureidoglycolate lyase (160 aa).

The protein belongs to the ureidoglycolate lyase family. As to quaternary structure, homodimer. Requires Ni(2+) as cofactor.

It carries out the reaction (S)-ureidoglycolate = urea + glyoxylate. The protein operates within nitrogen metabolism; (S)-allantoin degradation. In terms of biological role, catalyzes the catabolism of the allantoin degradation intermediate (S)-ureidoglycolate, generating urea and glyoxylate. Involved in the anaerobic utilization of allantoin as sole nitrogen source. Reinforces the induction of genes involved in the degradation of allantoin and glyoxylate by producing glyoxylate. The polypeptide is Ureidoglycolate lyase (Escherichia coli (strain SMS-3-5 / SECEC)).